Reading from the N-terminus, the 745-residue chain is Gamma-tubulin complex component 4 (745 aa).

It belongs to the TUBGCP family. As to quaternary structure, gamma-tubulin complex is composed of gamma-tubulin and GCP proteins.

It localises to the cytoplasm. Its subcellular location is the cytoskeleton. The protein localises to the microtubule organizing center. It is found in the spindle. Gamma-tubulin complex is necessary for microtubule nucleation at the microtubule organizing centers (MTOCs). Functionally, gamma-tubulin complex is essential for the control of microtubular network remodeling in the course of initiation and development of giant-feeding cells, and for the successful reproduction of nematodes (e.g. Meloidogyne spp.) in their plant hosts. The polypeptide is Gamma-tubulin complex component 4 (GCP4) (Arabidopsis thaliana (Mouse-ear cress)).